The chain runs to 176 residues: MSRVANNPITVPKGVEVTLGDGIAVKGPLGSMSQPMSSDVTVALNDGVLTFAPVGSSIQANAMAGTLRALVNNMVQGVSKGFERKLTLVGVGYRAQAQGDALNLSLGFSHPVVHKMPAGIKVETPTQTEIVIKGIDRQAVGQVAADVRAYRPPEPYKGKGVRYSDEVVIKKETKKK.

This sequence belongs to the universal ribosomal protein uL6 family. Part of the 50S ribosomal subunit.

In terms of biological role, this protein binds to the 23S rRNA, and is important in its secondary structure. It is located near the subunit interface in the base of the L7/L12 stalk, and near the tRNA binding site of the peptidyltransferase center. This is Large ribosomal subunit protein uL6 from Thiobacillus denitrificans (strain ATCC 25259 / T1).